The following is a 422-amino-acid chain: 3-phosphoshikimate 1-carboxyvinyltransferase (422 aa).

Positions 21, 22, and 26 each coordinate 3-phosphoshikimate. Phosphoenolpyruvate is bound at residue K21. Phosphoenolpyruvate is bound by residues G93 and R121. S166, S167, Q168, S194, D310, and K337 together coordinate 3-phosphoshikimate. Q168 contributes to the phosphoenolpyruvate binding site. The Proton acceptor role is filled by D310. 3 residues coordinate phosphoenolpyruvate: R341, R382, and K407.

Belongs to the EPSP synthase family. As to quaternary structure, monomer.

It localises to the cytoplasm. It catalyses the reaction 3-phosphoshikimate + phosphoenolpyruvate = 5-O-(1-carboxyvinyl)-3-phosphoshikimate + phosphate. It participates in metabolic intermediate biosynthesis; chorismate biosynthesis. Catalyzes the transfer of the enolpyruvyl moiety of phosphoenolpyruvate (PEP) to the 5-hydroxyl of shikimate-3-phosphate (S3P) to produce enolpyruvyl shikimate-3-phosphate and inorganic phosphate. The polypeptide is 3-phosphoshikimate 1-carboxyvinyltransferase (Methanoculleus marisnigri (strain ATCC 35101 / DSM 1498 / JR1)).